Consider the following 180-residue polypeptide: ATP synthase subunit b (180 aa).

A helical transmembrane segment spans residues 26 to 48 (SMILFWKAVNTVILLGLVYYFGG).

This sequence belongs to the ATPase B chain family. F-type ATPases have 2 components, F(1) - the catalytic core - and F(0) - the membrane proton channel. F(1) has five subunits: alpha(3), beta(3), gamma(1), delta(1), epsilon(1). F(0) has three main subunits: a(1), b(2) and c(10-14). The alpha and beta chains form an alternating ring which encloses part of the gamma chain. F(1) is attached to F(0) by a central stalk formed by the gamma and epsilon chains, while a peripheral stalk is formed by the delta and b chains.

The protein resides in the cell inner membrane. In terms of biological role, f(1)F(0) ATP synthase produces ATP from ADP in the presence of a proton or sodium gradient. F-type ATPases consist of two structural domains, F(1) containing the extramembraneous catalytic core and F(0) containing the membrane proton channel, linked together by a central stalk and a peripheral stalk. During catalysis, ATP synthesis in the catalytic domain of F(1) is coupled via a rotary mechanism of the central stalk subunits to proton translocation. Its function is as follows. Component of the F(0) channel, it forms part of the peripheral stalk, linking F(1) to F(0). The protein is ATP synthase subunit b of Sulfurihydrogenibium sp. (strain YO3AOP1).